Reading from the N-terminus, the 235-residue chain is Exosome complex component Rrp4 (235 aa).

The region spanning 63–137 (GDLVIGYVTD…DEYPIILTLK (75 aa)) is the S1 motif domain. The KH domain maps to 147–203 (GTVVEITPVKVPRVIGKRGSMLNTLMELGCDIVVGQNGRIWVKCKDPRDEVFLASLI).

Belongs to the RRP4 family. In terms of assembly, component of the archaeal exosome complex. Forms a trimer of Rrp4 and/or Csl4 subunits. The trimer associates with a hexameric ring-like arrangement composed of 3 Rrp41-Rrp42 heterodimers.

It localises to the cytoplasm. Its function is as follows. Non-catalytic component of the exosome, which is a complex involved in RNA degradation. Increases the RNA binding and the efficiency of RNA degradation. Confers strong poly(A) specificity to the exosome. The polypeptide is Exosome complex component Rrp4 (Pyrobaculum aerophilum (strain ATCC 51768 / DSM 7523 / JCM 9630 / CIP 104966 / NBRC 100827 / IM2)).